Here is a 498-residue protein sequence, read N- to C-terminus: Lysine--tRNA ligase (498 aa).

Mg(2+) contacts are provided by Glu-408 and Glu-415.

This sequence belongs to the class-II aminoacyl-tRNA synthetase family. In terms of assembly, homodimer. Mg(2+) serves as cofactor.

It is found in the cytoplasm. It catalyses the reaction tRNA(Lys) + L-lysine + ATP = L-lysyl-tRNA(Lys) + AMP + diphosphate. The chain is Lysine--tRNA ligase from Pediococcus pentosaceus (strain ATCC 25745 / CCUG 21536 / LMG 10740 / 183-1w).